The primary structure comprises 430 residues: Cholecystokinin receptor type A (430 aa).

The Extracellular portion of the chain corresponds to 1–41; sequence MDVVDSLFVNGSNITSACELGFENETLFCLDRPRPSKEWQP. N10, N13, and N24 each carry an N-linked (GlcNAc...) asparagine glycan. C18 and C29 are disulfide-bonded. A helical membrane pass occupies residues 42 to 67; the sequence is AVQILLYSLIFLLSVLGNTLVITVLI. The Cytoplasmic portion of the chain corresponds to 68-77; sequence RNKRMRTVTN. Residues 78–104 form a helical membrane-spanning segment; sequence IFLLSLAVSDLMLCLFCMPFNLIPSLL. Residues 105–115 are Extracellular-facing; it reads KDFIFGSAVCK. The cysteines at positions 114 and 196 are disulfide-linked. Residues 116–137 form a helical membrane-spanning segment; that stretch reads TTTYFMGTSVSVSTFNLVAISL. Residues 138–157 lie on the Cytoplasmic side of the membrane; sequence ERYGAICKPLQSRVWQTKSH. Residues 158–178 form a helical membrane-spanning segment; the sequence is ALKVIAATWCLSFTIMTPYPI. Residues 179-210 are Extracellular-facing; it reads YSNLVPFTKNNNQTGNMCRFLLPNDVMQQTWH. N190 carries an N-linked (GlcNAc...) asparagine glycan. Residues 211 to 234 form a helical membrane-spanning segment; sequence TFLLLILFLIPGIVMMVAYGLISL. Residues 235–315 lie on the Cytoplasmic side of the membrane; sequence ELYQGIKFDA…NLMAKKRVIR (81 aa). Residues 316 to 336 form a helical membrane-spanning segment; sequence MLIVIVVLFFLCWMPIFSANA. Over 337-351 the chain is Extracellular; that stretch reads WRAYDTVSAERHLSG. Residues 352–375 traverse the membrane as a helical segment; the sequence is TPISFILLLSYTSSCVNPIIYCFM. At 376–430 the chain is on the cytoplasmic side; it reads NKRFRLGFMATFPCCPNPGTPGVRGEMGEEEEGRTTGASLSRYSYSHMSTSAPPP. Residue C389 is the site of S-palmitoyl cysteine attachment. Residues 396–430 form a disordered region; it reads PGVRGEMGEEEEGRTTGASLSRYSYSHMSTSAPPP. Polar residues predominate over residues 413-430; sequence ASLSRYSYSHMSTSAPPP.

The protein belongs to the G-protein coupled receptor 1 family.

It is found in the cell membrane. Functionally, receptor for cholecystokinin. Mediates pancreatic growth and enzyme secretion, smooth muscle contraction of the gall bladder and stomach. Has a 1000-fold higher affinity for CCK rather than for gastrin. It modulates feeding and dopamine-induced behavior in the central and peripheral nervous system. This receptor mediates its action by association with G proteins that activate a phosphatidylinositol-calcium second messenger system. The chain is Cholecystokinin receptor type A (CCKAR) from Cavia porcellus (Guinea pig).